Reading from the N-terminus, the 115-residue chain is Large ribosomal subunit protein bL19 (115 aa).

The protein belongs to the bacterial ribosomal protein bL19 family.

This protein is located at the 30S-50S ribosomal subunit interface and may play a role in the structure and function of the aminoacyl-tRNA binding site. The sequence is that of Large ribosomal subunit protein bL19 from Buchnera aphidicola subsp. Cinara cedri (strain Cc).